The chain runs to 494 residues: Lysine--tRNA ligase (494 aa).

The Mg(2+) site is built by Glu399 and Glu406.

The protein belongs to the class-II aminoacyl-tRNA synthetase family. The cofactor is Mg(2+).

Its subcellular location is the cytoplasm. The catalysed reaction is tRNA(Lys) + L-lysine + ATP = L-lysyl-tRNA(Lys) + AMP + diphosphate. The chain is Lysine--tRNA ligase (lysS) from Saccharolobus solfataricus (strain ATCC 35092 / DSM 1617 / JCM 11322 / P2) (Sulfolobus solfataricus).